Consider the following 282-residue polypeptide: Heat stress transcription factor A-6a (282 aa).

A DNA-binding region spans residues 17 to 111 (PTAFLTKTYN…LLKNIKRRKT (95 aa)). Positions 111–177 (TSSQTQTQSL…MMMNFLLKKI (67 aa)) are hydrophobic repeat HR-A/B. The Bipartite nuclear localization signal signature appears at 175–190 (KKIKKPSFLQSLRKRN). Positions 261–270 (EGIWKGFVLS) match the AHA motif.

It belongs to the HSF family. Class A subfamily. Homotrimer. Exhibits temperature-dependent phosphorylation.

The protein localises to the nucleus. Transcriptional activator that specifically binds DNA sequence 5'-AGAAnnTTCT-3' known as heat shock promoter elements (HSE). This Arabidopsis thaliana (Mouse-ear cress) protein is Heat stress transcription factor A-6a (HSFA6A).